A 188-amino-acid chain; its full sequence is FMN-dependent NADPH-azoreductase (188 aa).

It belongs to the azoreductase type 2 family. As to quaternary structure, homotetramer. Requires FMN as cofactor.

In terms of biological role, catalyzes the reductive cleavage of azo bond in aromatic azo compounds to the corresponding amines. Requires NADPH, but not NADH, as an electron donor for its activity. The sequence is that of FMN-dependent NADPH-azoreductase (azo1) from Staphylococcus epidermidis (strain ATCC 12228 / FDA PCI 1200).